The sequence spans 390 residues: S-adenosylmethionine synthase 2 (390 aa).

Glu9 serves as a coordination point for Mg(2+). ATP is bound at residue His15. Glu43 serves as a coordination point for K(+). Residues Glu56 and Gln99 each contribute to the L-methionine site. Residues 167-169, 235-238, Asp246, 252-253, Ala269, Lys273, and Lys277 each bind ATP; these read DGK, SGRF, and RK. Residue Asp246 coordinates L-methionine. Lys277 serves as a coordination point for L-methionine.

It belongs to the AdoMet synthase family. As to quaternary structure, homotetramer. Mn(2+) is required as a cofactor. The cofactor is Mg(2+). It depends on Co(2+) as a cofactor. Requires K(+) as cofactor.

Its subcellular location is the cytoplasm. The enzyme catalyses L-methionine + ATP + H2O = S-adenosyl-L-methionine + phosphate + diphosphate. It functions in the pathway amino-acid biosynthesis; S-adenosyl-L-methionine biosynthesis; S-adenosyl-L-methionine from L-methionine: step 1/1. Its function is as follows. Catalyzes the formation of S-adenosylmethionine from methionine and ATP. The reaction comprises two steps that are both catalyzed by the same enzyme: formation of S-adenosylmethionine (AdoMet) and triphosphate, and subsequent hydrolysis of the triphosphate. This Actinidia chinensis var. chinensis (Chinese soft-hair kiwi) protein is S-adenosylmethionine synthase 2 (SAM2).